A 371-amino-acid polypeptide reads, in one-letter code: Dual-specificity RNA methyltransferase RlmN (371 aa).

Glu114 functions as the Proton acceptor in the catalytic mechanism. The Radical SAM core domain maps to 120–352 (EEDHFTLCVS…VMTRQSKGAD (233 aa)). Cys127 and Cys357 are disulfide-bonded. Cys134, Cys138, and Cys141 together coordinate [4Fe-4S] cluster. Residues 183-184 (GE), Ser216, 238-240 (SLN), and Asn314 each bind S-adenosyl-L-methionine. Cys357 functions as the S-methylcysteine intermediate in the catalytic mechanism.

Belongs to the radical SAM superfamily. RlmN family. It depends on [4Fe-4S] cluster as a cofactor.

Its subcellular location is the cytoplasm. It carries out the reaction adenosine(2503) in 23S rRNA + 2 reduced [2Fe-2S]-[ferredoxin] + 2 S-adenosyl-L-methionine = 2-methyladenosine(2503) in 23S rRNA + 5'-deoxyadenosine + L-methionine + 2 oxidized [2Fe-2S]-[ferredoxin] + S-adenosyl-L-homocysteine. It catalyses the reaction adenosine(37) in tRNA + 2 reduced [2Fe-2S]-[ferredoxin] + 2 S-adenosyl-L-methionine = 2-methyladenosine(37) in tRNA + 5'-deoxyadenosine + L-methionine + 2 oxidized [2Fe-2S]-[ferredoxin] + S-adenosyl-L-homocysteine. Functionally, specifically methylates position 2 of adenine 2503 in 23S rRNA and position 2 of adenine 37 in tRNAs. m2A2503 modification seems to play a crucial role in the proofreading step occurring at the peptidyl transferase center and thus would serve to optimize ribosomal fidelity. The protein is Dual-specificity RNA methyltransferase RlmN of Desulfosudis oleivorans (strain DSM 6200 / JCM 39069 / Hxd3) (Desulfococcus oleovorans).